An 816-amino-acid chain; its full sequence is Phosphatidylinositol 4-kinase beta (816 aa).

Disordered stretches follow at residues 1-30, 101-120, and 248-318; these read MGDT…GSLL, EDEM…RRRR, and AHRK…SFSS. Gly2 carries the N-acetylglycine modification. Positions 2-68 are interaction with ACBD3; that stretch reads GDTIVEPAPL…VKLLHGGVAI (67 aa). One can recognise a PIK helical domain in the interval 29–242; sequence LLSVITEGVG…GTKLRKLILS (214 aa). Ser258 is subject to Phosphoserine. Position 263 is a phosphothreonine (Thr263). Ser266, Ser275, Ser277, Ser284, and Ser294 each carry phosphoserine. 2 stretches are compositionally biased toward polar residues: residues 278-297 and 306-318; these read DATA…SNPK and SSST…SFSS. Ser428 carries the post-translational modification Phosphoserine. Position 438 is a phosphothreonine (Thr438). Ser511 is subject to Phosphoserine. Phosphothreonine is present on residues Thr517 and Thr519. A PI3K/PI4K catalytic domain is found at 535 to 801; it reads EPWQEKVRRI…MVDGSMRSIT (267 aa). The segment at 541–547 is G-loop; that stretch reads VRRIREG. The segment at 668–676 is catalytic loop; it reads QVKDRHNGN. Positions 687–711 are activation loop; that stretch reads HIDFGFILSSSPRNLGFETSAFKLT.

This sequence belongs to the PI3/PI4-kinase family. Type III PI4K subfamily. As to quaternary structure, interacts with ARF1 and ARF3 in the Golgi complex, but not with ARF4, ARF5 or ARF6. Interacts with NCS1/FREQ in a calcium-independent manner. Interacts with CALN1/CABP8 and CALN2/CABP7; in a calcium-dependent manner; this interaction competes with NCS1/FREQ binding. Interacts with ACBD3. Interacts with ARMH3, YWHAB, YWHAE, YWHAG, YWHAH, YWHAQ, YWHAZ and SFN. Interacts with GGA2 (via VHS domain); the interaction is important for PI4KB location at the Golgi apparatus membrane. Interacts with ATG9A. Requires Mg(2+) as cofactor. Mn(2+) is required as a cofactor.

The protein localises to the endomembrane system. Its subcellular location is the mitochondrion outer membrane. The protein resides in the rough endoplasmic reticulum membrane. It is found in the golgi apparatus. It localises to the golgi apparatus membrane. The enzyme catalyses a 1,2-diacyl-sn-glycero-3-phospho-(1D-myo-inositol) + ATP = a 1,2-diacyl-sn-glycero-3-phospho-(1D-myo-inositol 4-phosphate) + ADP + H(+). Its activity is regulated as follows. Inhibited by wortmannin. Increased kinase activity upon interaction with NCS1/FREQ. Phosphorylates phosphatidylinositol (PI) in the first committed step in the production of the second messenger inositol-1,4,5,-trisphosphate (PIP). May regulate Golgi disintegration/reorganization during mitosis, possibly via its phosphorylation. Involved in Golgi-to-plasma membrane trafficking. This Bos taurus (Bovine) protein is Phosphatidylinositol 4-kinase beta (PI4KB).